Consider the following 521-residue polypeptide: Citrinin biosynthesis cluster MFS transporter ctnC (521 aa).

The tract at residues 1–29 (MKEEIDAPVSTDASGTDLENARDQPSGEK) is disordered. The next 8 helical transmembrane spans lie at 58–78 (SLIT…SSVF), 95–115 (VMTL…LVWG), 124–144 (LKPL…VAVA), 155–175 (FFLG…LADF), 182–202 (AIAI…GPIM), 237–257 (WTAW…FLTL), 313–333 (ILVC…LFFV), and 349–369 (GIAA…CLLV). The N-linked (GlcNAc...) asparagine glycan is linked to N383. 4 helical membrane-spanning segments follow: residues 392–412 (LPPM…FGWT), 417–437 (ISWA…LMIW), 465–485 (AVSA…GVDW), and 489–509 (LLGF…FYGA).

Belongs to the major facilitator superfamily. CAR1 family.

It localises to the membrane. MFS transporter; part of the gene cluster that mediates the biosynthesis the mycotoxin citrinin, a hepato-nephrotoxic compound to humans due to inhibition of respiration complex III. This is Citrinin biosynthesis cluster MFS transporter ctnC (ctnC) from Monascus purpureus (Red mold).